The chain runs to 256 residues: Triosephosphate isomerase (256 aa).

Asparagine 12 to lysine 14 contacts substrate. Catalysis depends on histidine 99, which acts as the Electrophile. The active-site Proton acceptor is glutamate 169. Substrate contacts are provided by residues glycine 175, serine 214, and glycine 235–glycine 236.

The protein belongs to the triosephosphate isomerase family. Homodimer.

It is found in the cytoplasm. The enzyme catalyses D-glyceraldehyde 3-phosphate = dihydroxyacetone phosphate. It functions in the pathway carbohydrate biosynthesis; gluconeogenesis. It participates in carbohydrate degradation; glycolysis; D-glyceraldehyde 3-phosphate from glycerone phosphate: step 1/1. Functionally, involved in the gluconeogenesis. Catalyzes stereospecifically the conversion of dihydroxyacetone phosphate (DHAP) to D-glyceraldehyde-3-phosphate (G3P). This Rhizobium etli (strain ATCC 51251 / DSM 11541 / JCM 21823 / NBRC 15573 / CFN 42) protein is Triosephosphate isomerase.